The following is a 134-amino-acid chain: MGFKRYVEIGRVALVNYGEDHGKLVVIVDVVDQNRALVDAPDMERIQMNFKRLSLTDIVIDINRVPKKKALIEAMEKADVKNKWEKSSWGRKLIVQKRRANLNDFDRFKIMLAKIKKAGVVRQELAKLKKEITA.

This sequence belongs to the eukaryotic ribosomal protein eL14 family.

In Arabidopsis thaliana (Mouse-ear cress), this protein is Large ribosomal subunit protein eL14y (RPL14B).